The chain runs to 168 residues: Photosystem I assembly protein Ycf3 (168 aa).

TPR repeat units follow at residues 35-68, 72-105, and 120-153; these read AFTY…EIDP, SYIL…NSFL, and GEQA…TPGN.

Belongs to the Ycf3 family.

It is found in the plastid. Its subcellular location is the chloroplast thylakoid membrane. In terms of biological role, essential for the assembly of the photosystem I (PSI) complex. May act as a chaperone-like factor to guide the assembly of the PSI subunits. The protein is Photosystem I assembly protein Ycf3 of Jasminum nudiflorum (Winter jasmine).